Reading from the N-terminus, the 207-residue chain is Outer-membrane lipoprotein carrier protein (207 aa).

Residues 1–21 (MRAIRMLLVSALTLGSVTAYA) form the signal peptide.

This sequence belongs to the LolA family. As to quaternary structure, monomer.

Its subcellular location is the periplasm. Functionally, participates in the translocation of lipoproteins from the inner membrane to the outer membrane. Only forms a complex with a lipoprotein if the residue after the N-terminal Cys is not an aspartate (The Asp acts as a targeting signal to indicate that the lipoprotein should stay in the inner membrane). The polypeptide is Outer-membrane lipoprotein carrier protein (Pseudomonas putida (strain ATCC 47054 / DSM 6125 / CFBP 8728 / NCIMB 11950 / KT2440)).